Consider the following 553-residue polypeptide: Syntaxin-binding protein 4 (553 aa).

Phosphoserine occurs at positions 10, 12, 99, and 212. Positions 19–105 (AFQMITIAKE…RLESAWEIAF (87 aa)) constitute a PDZ domain. A coiled-coil region spans residues 291-417 (SSEADEMERL…VLDCQLRKSE (127 aa)). At serine 463 the chain carries Phosphoserine. The WW domain occupies 496–529 (DCLPYGWEEAYTADGIKYFINHVTQTTSWIHPVM).

As to quaternary structure, interacts with STX4A. In terms of processing, phosphorylated on Ser-99 by PKB/AKT2 after insulin treatment. Phosphorylation on Ser-99 abolishes the interaction with STX4A.

Its subcellular location is the cytoplasm. In terms of biological role, plays a role in the translocation of transport vesicles from the cytoplasm to the plasma membrane. Inhibits the translocation of SLC2A4 from intracellular vesicles to the plasma membrane by STX4A binding and preventing the interaction between STX4A and VAMP2. Stimulation with insulin disrupts the interaction with STX4A, leading to increased levels of SLC2A4 at the plasma membrane. May also play a role in the regulation of insulin release by pancreatic beta cells after stimulation by glucose. The sequence is that of Syntaxin-binding protein 4 (STXBP4) from Homo sapiens (Human).